Consider the following 543-residue polypeptide: Organic anion transporter 3 (543 aa).

At 1–21 the chain is on the cytoplasmic side; the sequence is MTFAELVDRVGSKGPFQLLHT. A helical membrane pass occupies residues 22–42; that stretch reads VLLGLPILGMANHNLLQIFTA. The Extracellular portion of the chain corresponds to 43–124; the sequence is PTPAHHCRPP…LVCSSSKLKE (82 aa). N-linked (GlcNAc...) asparagine glycosylation occurs at asparagine 81. A helical transmembrane segment spans residues 125-145; the sequence is MAQSVFMAGILVGGLVLGALS. Residues 146-151 lie on the Cytoplasmic side of the membrane; that stretch reads DRFGRK. The chain crosses the membrane as a helical span at residues 152-172; sequence PILIFSYLLLGASGSGAAFSP. The Extracellular portion of the chain corresponds to 173-181; the sequence is TFSIYAVFR. A helical transmembrane segment spans residues 182–202; it reads FLCGFSISGISLSTAILNVEW. Residues 203–212 lie on the Cytoplasmic side of the membrane; sequence VSTRFRAIKS. Residues 213-233 traverse the membrane as a helical segment; that stretch reads IAVGFFYTFGQFILPGLAYAI. The Extracellular portion of the chain corresponds to 234 to 237; that stretch reads PQWR. Residues 238 to 258 form a helical membrane-spanning segment; sequence WLQLTVSVPFLTFFLLSWWLP. Residues 259–328 are Cytoplasmic-facing; the sequence is ESIRWMVLSG…FRTPVLRRVT (70 aa). The helical transmembrane segment at 329–349 threads the bilayer; sequence LCLSLAWFATGFAYYSLAMGV. At 350-355 the chain is on the extracellular side; the sequence is EEFGVN. A helical membrane pass occupies residues 356–376; it reads LYVLQLIFGGVDVPAKFITML. The Cytoplasmic segment spans residues 377 to 388; it reads SISYLGRHITEG. The helical transmembrane segment at 389-409 threads the bilayer; the sequence is IVLLLAGGCILALIFVPLDLM. Residues 410–412 lie on the Extracellular side of the membrane; the sequence is TLR. A helical membrane pass occupies residues 413-433; sequence TVLAVFGKGCLSGSFSCLFLY. At 434-472 the chain is on the cytoplasmic side; that stretch reads TSELYPTVIRQTGMGASNLWARVGSMTAPLVKITGELQP. A helical transmembrane segment spans residues 473 to 493; sequence FIPNIIFGTIALLGGSAALFL. Residues 494–543 lie on the Extracellular side of the membrane; the sequence is PETLNRPLPETIEDIETWSLRAKEPKPEPEAEKSSQRIPLQPCEPGPGPS. The segment at 513–543 is disordered; the sequence is LRAKEPKPEPEAEKSSQRIPLQPCEPGPGPS. Residues 514-528 are compositionally biased toward basic and acidic residues; sequence RAKEPKPEPEAEKSS.

This sequence belongs to the major facilitator (TC 2.A.1) superfamily. Organic cation transporter (TC 2.A.1.19) family. In terms of tissue distribution, expressed in kidney.

It is found in the basolateral cell membrane. The enzyme catalyses estrone 3-sulfate(out) + glutarate(in) = estrone 3-sulfate(in) + glutarate(out). It catalyses the reaction estrone 3-sulfate(in) + 2-oxoglutarate(out) = estrone 3-sulfate(out) + 2-oxoglutarate(in). It carries out the reaction glutarate(in) + 2-oxoglutarate(out) = glutarate(out) + 2-oxoglutarate(in). The catalysed reaction is urate(in) + 2-oxoglutarate(out) = urate(out) + 2-oxoglutarate(in). The enzyme catalyses taurocholate(out) + glutarate(in) = taurocholate(in) + glutarate(out). It catalyses the reaction dehydroepiandrosterone 3-sulfate(out) + glutarate(in) = dehydroepiandrosterone 3-sulfate(in) + glutarate(out). It carries out the reaction prostaglandin F2alpha(out) + glutarate(in) = prostaglandin F2alpha(in) + glutarate(out). The catalysed reaction is prostaglandin F2alpha(out) + 2-oxoglutarate(in) = prostaglandin F2alpha(in) + 2-oxoglutarate(out). The enzyme catalyses (R)-carnitine(out) + 2-oxoglutarate(in) = (R)-carnitine(in) + 2-oxoglutarate(out). It catalyses the reaction glutarate(in) + (R)-carnitine(out) = glutarate(out) + (R)-carnitine(in). It carries out the reaction prostaglandin E2(out) + 2-oxoglutarate(in) = prostaglandin E2(in) + 2-oxoglutarate(out). The catalysed reaction is prostaglandin E2(out) + glutarate(in) = prostaglandin E2(in) + glutarate(out). The enzyme catalyses urate(in) + glutarate(out) = urate(out) + glutarate(in). It catalyses the reaction taurocholate(out) + 2-oxoglutarate(in) = taurocholate(in) + 2-oxoglutarate(out). It carries out the reaction dehydroepiandrosterone 3-sulfate(out) + 2-oxoglutarate(in) = dehydroepiandrosterone 3-sulfate(in) + 2-oxoglutarate(out). The catalysed reaction is kynurenate(out) + a dicarboxylate(in) = kynurenate(in) + a dicarboxylate(out). The enzyme catalyses (indol-3-yl)acetate(out) + a dicarboxylate(in) = (indol-3-yl)acetate(in) + a dicarboxylate(out). It catalyses the reaction indoxyl sulfate(out) + a dicarboxylate(in) = indoxyl sulfate(in) + a dicarboxylate(out). It carries out the reaction N-benzoylglycine(out) + a dicarboxylate(in) = N-benzoylglycine(in) + a dicarboxylate(out). The catalysed reaction is 3-carboxy-4-methyl-5-propyl-2-furanpropanoate(out) + a dicarboxylate(in) = 3-carboxy-4-methyl-5-propyl-2-furanpropanoate(in) + a dicarboxylate(out). The enzyme catalyses (6R)-L-erythro-5,6,7,8-tetrahydrobiopterin(out) + a dicarboxylate(in) = (6R)-L-erythro-5,6,7,8-tetrahydrobiopterin(in) + a dicarboxylate(out). It catalyses the reaction L-erythro-7,8-dihydrobiopterin(out) + a dicarboxylate(in) = L-erythro-7,8-dihydrobiopterin(in) + a dicarboxylate(out). It carries out the reaction L-sepiapterin(out) + a dicarboxylate(in) = L-sepiapterin(in) + a dicarboxylate(out). Its function is as follows. Functions as an organic anion/dicarboxylate exchanger that couples organic anion uptake indirectly to the sodium gradient. Transports organic anions such as estrone 3-sulfate (E1S) and urate in exchange for dicarboxylates such as glutarate or ketoglutarate (2-oxoglutarate). Plays an important role in the excretion of endogenous and exogenous organic anions, especially from the kidney and the brain. E1S transport is pH- and chloride-dependent and may also involve E1S/cGMP exchange. Responsible for the transport of prostaglandin E2 (PGE2) and prostaglandin F2(alpha) (PGF2(alpha)) in the basolateral side of the renal tubule. Involved in the transport of neuroactive tryptophan metabolites kynurenate and xanthurenate. Functions as a biopterin transporters involved in the uptake and the secretion of coenzymes tetrahydrobiopterin (BH4), dihydrobiopterin (BH2) and sepiapterin to urine, thereby determining baseline levels of blood biopterins. May be involved in the basolateral transport of steviol, a metabolite of the popular sugar substitute stevioside. May participate in the detoxification/ renal excretion of drugs and xenobiotics, such as the histamine H(2)-receptor antagonists fexofenadine and cimetidine, the antibiotic benzylpenicillin (PCG), the anionic herbicide 2,4-dichloro-phenoxyacetate (2,4-D), the diagnostic agent p-aminohippurate (PAH), the antiviral acyclovir (ACV), and the mycotoxin ochratoxin (OTA), by transporting these exogenous organic anions across the cell membrane in exchange for dicarboxylates such as 2-oxoglutarate. Contributes to the renal uptake of potent uremic toxins (indoxyl sulfate (IS), indole acetate (IA), hippurate/N-benzoylglycine (HA) and 3-carboxy-4-methyl-5-propyl-2-furanpropionate (CMPF)), pravastatin, PCG, E1S and dehydroepiandrosterone sulfate (DHEAS), and is partly involved in the renal uptake of temocaprilat (an angiotensin-converting enzyme (ACE) inhibitor). May contribute to the release of cortisol in the adrenals. Involved in one of the detoxification systems on the choroid plexus (CP), removes substrates such as E1S or taurocholate (TC), PCG, 2,4-D and PAH, from the cerebrospinal fluid (CSF) to the blood for eventual excretion in urine and bile. Also contributes to the uptake of several other organic compounds such as the prostanoids prostaglandin E(2) and prostaglandin F(2-alpha), L-carnitine, and the therapeutic drugs allopurinol, 6-mercaptopurine (6-MP) and 5-fluorouracil (5-FU). Mediates the transport of PAH, PCG, and the statins pravastatin and pitavastatin, from the cerebrum into the blood circulation across the blood-brain barrier (BBB). In summary, plays a role in the efflux of drugs and xenobiotics, helping reduce their undesired toxicological effects on the body. This Sus scrofa (Pig) protein is Organic anion transporter 3 (SLC22A8).